A 511-amino-acid polypeptide reads, in one-letter code: Maturase K (511 aa).

Belongs to the intron maturase 2 family. MatK subfamily.

The protein resides in the plastid. It is found in the chloroplast. In terms of biological role, usually encoded in the trnK tRNA gene intron. Probably assists in splicing its own and other chloroplast group II introns. The protein is Maturase K of Hordeum secalinum (Meadow barley).